Consider the following 468-residue polypeptide: Acetyl-CoA decarbonylase/synthase complex subunit gamma (468 aa).

The 4Fe-4S domain occupies 1–60; that stretch reads MKINSPLEAYKYLPQTNCGECGEATCMAFASKLIDRSGKTSDCPPLIKEKKFAKKLAELD. Residues C18, C21, C26, and C43 each coordinate [4Fe-4S] cluster.

As to quaternary structure, heterodimer of delta and gamma chains. The ACDS complex is made up of alpha, epsilon, beta, gamma and delta chains with a probable stoichiometry of (alpha(2)epsilon(2))(4)-beta(8)-(gamma(1)delta(1))(8). Requires corrinoid as cofactor. The cofactor is [4Fe-4S] cluster.

It catalyses the reaction 5,6,7,8-tetrahydrosarcinapterin + methyl-Co(III)-[corrinoid Fe-S protein] = 5-methyltetrahydrosarcinapterin + Co(I)-[corrinoid Fe-S protein] + H(+). The protein operates within one-carbon metabolism; methanogenesis from acetate. Its function is as follows. Part of a complex that catalyzes the reversible cleavage of acetyl-CoA, allowing growth on acetate as sole source of carbon and energy. The polypeptide is Acetyl-CoA decarbonylase/synthase complex subunit gamma (Methanosarcina acetivorans (strain ATCC 35395 / DSM 2834 / JCM 12185 / C2A)).